The chain runs to 557 residues: BZIP-type transcription factor MBZ1 (557 aa).

A compositionally biased stretch (low complexity) spans 171 to 194 (AKAQAQQRQQQQQQQLIQQTQRQT). Disordered stretches follow at residues 171–209 (AKAQAQQRQQQQQQQLIQQTQRQTSPKSRGKAPQPTDPI) and 221–273 (MRAK…RQLR). The span at 229–240 (EPESQSVLNNLP) shows a compositional bias: polar residues. Positions 254 to 271 (RLLASEEGKKLSSKERRQ) are enriched in basic and acidic residues. Positions 264-327 (LSSKERRQLR…KRLSDLTRML (64 aa)) constitute a bZIP domain. Residues 267 to 286 (KERRQLRNKVSARAFRSRRK) are basic motif. The leucine-zipper stretch occupies residues 289 to 296 (ISQLEAEI). Positions 344–364 (PTGLPQGSPVKIEQNPQQEQN) are disordered.

The protein resides in the nucleus. BZIP-type transcription factor that functions as either an activator or a suppressor, and which contributes to the regulation of fungal growth, conidiation, cell wall integrity, and virulence. Plays a key role in virulence against insects by mediating cell wall integrity, cell surface hydrophobicity, and adherence to hydrophobic surfaces. Exhibits negative regulation of subtilisin proteases, but positive control of an adhesin gene. The sequence is that of BZIP-type transcription factor MBZ1 from Metarhizium robertsii (strain ARSEF 23 / ATCC MYA-3075) (Metarhizium anisopliae (strain ARSEF 23)).